Here is a 313-residue protein sequence, read N- to C-terminus: Formimidoylglutamase (313 aa).

Mn(2+) contacts are provided by His130, Asp155, His157, Asp159, Asp241, and Asp243.

Belongs to the arginase family. Requires Mn(2+) as cofactor.

The enzyme catalyses N-formimidoyl-L-glutamate + H2O = formamide + L-glutamate. It participates in amino-acid degradation; L-histidine degradation into L-glutamate; L-glutamate from N-formimidoyl-L-glutamate (hydrolase route): step 1/1. Its function is as follows. Catalyzes the conversion of N-formimidoyl-L-glutamate to L-glutamate and formamide. The sequence is that of Formimidoylglutamase from Salmonella choleraesuis (strain SC-B67).